A 243-amino-acid chain; its full sequence is GTP cyclohydrolase 1 type 2 (243 aa).

A divalent metal cation is bound by residues histidine 63, histidine 64, aspartate 102, histidine 209, and glutamate 213.

It belongs to the GTP cyclohydrolase I type 2/NIF3 family. In terms of assembly, homohexamer.

It catalyses the reaction GTP + H2O = 7,8-dihydroneopterin 3'-triphosphate + formate + H(+). It participates in cofactor biosynthesis; 7,8-dihydroneopterin triphosphate biosynthesis; 7,8-dihydroneopterin triphosphate from GTP: step 1/1. Its function is as follows. Converts GTP to dihydroneopterin triphosphate. The chain is GTP cyclohydrolase 1 type 2 from Helicobacter pylori (strain J99 / ATCC 700824) (Campylobacter pylori J99).